A 472-amino-acid polypeptide reads, in one-letter code: Protein PIN-LIKES 1 (472 aa).

At 1–93 (MSLTQSAKLH…FYSMRMRLLD (93 aa)) the chain is on the lumenal side. Residues 94–114 (LFITSSIPVAKILLITGIGFY) form a helical membrane-spanning segment. At 115–133 (LALDQVNILNHDARKQLNN) the chain is on the cytoplasmic side. The chain crosses the membrane as a helical span at residues 134–154 (IVFYVFSPSLVASSLSETITY). Residues 155–161 (ESMVKMW) lie on the Lumenal side of the membrane. A helical transmembrane segment spans residues 162 to 182 (FMPLNVLLTFIIGSFLGWIVI). Residues 183–193 (KITKPPSHLRG) lie on the Cytoplasmic side of the membrane. Residues 194-214 (IIVGCCAAGNLGNMPLIIIPA) traverse the membrane as a helical segment. The Lumenal portion of the chain corresponds to 215–231 (ICNEKGSPFGDPESCEK). A helical transmembrane segment spans residues 232–252 (FGLGYIALSMAIGAIYIWTYV). The Cytoplasmic portion of the chain corresponds to 253–309 (YNLMRMLANPAGETAINSTSSTMPLISPKVEVAEQVGTWGKVKQRVCSVAEKINLRT). Residues 310 to 330 (IFAPSTIAALIALAVGLNPLL) form a helical membrane-spanning segment. The Lumenal portion of the chain corresponds to 331-347 (RKLLVGNTAPLRVIEDS). A helical transmembrane segment spans residues 348 to 368 (VSLLGDGAIPVLTLIVGGNLL). Residues 369–379 (NGLRGSGINKS) lie on the Cytoplasmic side of the membrane. A helical transmembrane segment spans residues 380–400 (VIMGVVVVRYLLLPILGVFIV). Residues 401-413 (RGAHYLGLVTSEP) lie on the Lumenal side of the membrane. A helical transmembrane segment spans residues 414-434 (LYQFVLLLQYVVPPAMNLGTI). Residues 435 to 446 (TQLFGSGESECS) are Cytoplasmic-facing. A helical transmembrane segment spans residues 447–467 (VILFWSYALASVSLTVWPTFF). Over 468–472 (MWLVA) the chain is Lumenal.

Belongs to the auxin efflux carrier (TC 2.A.69.2) family. As to expression, expressed in flowers.

It is found in the endoplasmic reticulum membrane. Its function is as follows. Involved in cellular auxin homeostasis by regulating auxin metabolism. Regulates intracellular auxin accumulation at the endoplasmic reticulum and thus auxin availability for nuclear auxin signaling. In Arabidopsis thaliana (Mouse-ear cress), this protein is Protein PIN-LIKES 1.